Here is a 562-residue protein sequence, read N- to C-terminus: Dihydroxy-acid dehydratase 2 (562 aa).

Position 50 (cysteine 50) interacts with [2Fe-2S] cluster. Aspartate 82 is a Mg(2+) binding site. [2Fe-2S] cluster is bound at residue cysteine 123. The Mg(2+) site is built by aspartate 124, lysine 125, and glutamate 447. An N6-carboxylysine modification is found at lysine 125. The Proton acceptor role is filled by serine 473.

It belongs to the IlvD/Edd family. In terms of assembly, homodimer. It depends on [2Fe-2S] cluster as a cofactor. Mg(2+) serves as cofactor.

It catalyses the reaction (2R)-2,3-dihydroxy-3-methylbutanoate = 3-methyl-2-oxobutanoate + H2O. The catalysed reaction is (2R,3R)-2,3-dihydroxy-3-methylpentanoate = (S)-3-methyl-2-oxopentanoate + H2O. It participates in amino-acid biosynthesis; L-isoleucine biosynthesis; L-isoleucine from 2-oxobutanoate: step 3/4. The protein operates within amino-acid biosynthesis; L-valine biosynthesis; L-valine from pyruvate: step 3/4. Its function is as follows. Functions in the biosynthesis of branched-chain amino acids. Catalyzes the dehydration of (2R,3R)-2,3-dihydroxy-3-methylpentanoate (2,3-dihydroxy-3-methylvalerate) into 2-oxo-3-methylpentanoate (2-oxo-3-methylvalerate) and of (2R)-2,3-dihydroxy-3-methylbutanoate (2,3-dihydroxyisovalerate) into 2-oxo-3-methylbutanoate (2-oxoisovalerate), the penultimate precursor to L-isoleucine and L-valine, respectively. In Bordetella pertussis (strain Tohama I / ATCC BAA-589 / NCTC 13251), this protein is Dihydroxy-acid dehydratase 2.